A 461-amino-acid polypeptide reads, in one-letter code: Cysteine--tRNA ligase (461 aa).

Zn(2+) is bound at residue Cys28. The 'HIGH' region signature appears at 30–40 (ITIYDLCHIGH). The Zn(2+) site is built by Cys209, His234, and Glu238. Positions 266–270 (KMSKS) match the 'KMSKS' region motif. Residue Lys269 coordinates ATP.

The protein belongs to the class-I aminoacyl-tRNA synthetase family. Monomer. Zn(2+) serves as cofactor.

The protein localises to the cytoplasm. The catalysed reaction is tRNA(Cys) + L-cysteine + ATP = L-cysteinyl-tRNA(Cys) + AMP + diphosphate. The chain is Cysteine--tRNA ligase from Yersinia pestis bv. Antiqua (strain Antiqua).